The sequence spans 495 residues: ATP synthase subunit beta, chloroplastic (495 aa).

Residue Gly-172–Thr-179 coordinates ATP.

It belongs to the ATPase alpha/beta chains family. In terms of assembly, F-type ATPases have 2 components, CF(1) - the catalytic core - and CF(0) - the membrane proton channel. CF(1) has five subunits: alpha(3), beta(3), gamma(1), delta(1), epsilon(1). CF(0) has four main subunits: a(1), b(1), b'(1) and c(9-12).

Its subcellular location is the plastid. It is found in the chloroplast thylakoid membrane. It catalyses the reaction ATP + H2O + 4 H(+)(in) = ADP + phosphate + 5 H(+)(out). Its function is as follows. Produces ATP from ADP in the presence of a proton gradient across the membrane. The catalytic sites are hosted primarily by the beta subunits. The chain is ATP synthase subunit beta, chloroplastic from Bowiea volubilis (Climbing onion).